An 87-amino-acid chain; its full sequence is Phosphoribosyl-ATP pyrophosphatase (87 aa).

It belongs to the PRA-PH family.

The protein localises to the cytoplasm. It carries out the reaction 1-(5-phospho-beta-D-ribosyl)-ATP + H2O = 1-(5-phospho-beta-D-ribosyl)-5'-AMP + diphosphate + H(+). It functions in the pathway amino-acid biosynthesis; L-histidine biosynthesis; L-histidine from 5-phospho-alpha-D-ribose 1-diphosphate: step 2/9. This is Phosphoribosyl-ATP pyrophosphatase from Leifsonia xyli subsp. xyli (strain CTCB07).